A 273-amino-acid chain; its full sequence is tRNA (guanine-N(7)-)-methyltransferase (273 aa).

The tract at residues 1 to 32 is disordered; it reads MSATAKKSAAQLQREEEEARKKLKRLSKQGGV. Residues glycine 88, 111–112, 150–151, and cysteine 170 contribute to the S-adenosyl-L-methionine site; these read EI and NC. Aspartate 173 is a catalytic residue. S-adenosyl-L-methionine is bound at residue 248-250; it reads TEE.

The protein belongs to the class I-like SAM-binding methyltransferase superfamily. TrmB family. In terms of assembly, forms a complex with trm82.

It is found in the nucleus. The catalysed reaction is guanosine(46) in tRNA + S-adenosyl-L-methionine = N(7)-methylguanosine(46) in tRNA + S-adenosyl-L-homocysteine. Its pathway is tRNA modification; N(7)-methylguanine-tRNA biosynthesis. Functionally, catalyzes the formation of N(7)-methylguanine at position 46 (m7G46) in tRNA. This is tRNA (guanine-N(7)-)-methyltransferase (trm8) from Schizosaccharomyces pombe (strain 972 / ATCC 24843) (Fission yeast).